We begin with the raw amino-acid sequence, 113 residues long: Ig heavy chain V-III region U61 (113 aa).

An Ig-like domain is found at 1 to 113; that stretch reads EVKLEESGGG…YWGQGTLVPV (113 aa). C22 and C98 are disulfide-bonded.

The protein is Ig heavy chain V-III region U61 of Mus musculus (Mouse).